A 181-amino-acid chain; its full sequence is Protein GrpE (181 aa).

Over residues 1–13 (MENTQENPATQSA) the composition is skewed to polar residues. Positions 1–34 (MENTQENPATQSAEDIGSAKQAAQGAAPAAEAAD) are disordered. The segment covering 19–34 (AKQAAQGAAPAAEAAD) has biased composition (low complexity).

Belongs to the GrpE family. Homodimer.

The protein localises to the cytoplasm. Participates actively in the response to hyperosmotic and heat shock by preventing the aggregation of stress-denatured proteins, in association with DnaK and GrpE. It is the nucleotide exchange factor for DnaK and may function as a thermosensor. Unfolded proteins bind initially to DnaJ; upon interaction with the DnaJ-bound protein, DnaK hydrolyzes its bound ATP, resulting in the formation of a stable complex. GrpE releases ADP from DnaK; ATP binding to DnaK triggers the release of the substrate protein, thus completing the reaction cycle. Several rounds of ATP-dependent interactions between DnaJ, DnaK and GrpE are required for fully efficient folding. This Burkholderia vietnamiensis (strain G4 / LMG 22486) (Burkholderia cepacia (strain R1808)) protein is Protein GrpE.